Here is a 403-residue protein sequence, read N- to C-terminus: Alkaline protease 1 (403 aa).

The first 21 residues, 1 to 21 (MQSIKRTLLLLGAVLPAVLAG), serve as a signal peptide directing secretion. Positions 22-121 (PIFPHRRAPT…VEEDQVWHLF (100 aa)) are excised as a propeptide. One can recognise an Inhibitor I9 domain in the interval 36 to 120 (KYIVTFKSDV…AVEEDQVWHL (85 aa)). In terms of domain architecture, Peptidase S8 spans 130–403 (PWGLGSISHK…PNLLAYNGNA (274 aa)). Active-site charge relay system residues include aspartate 162 and histidine 193. N-linked (GlcNAc...) asparagine glycans are attached at residues asparagine 253 and asparagine 309. Serine 349 serves as the catalytic Charge relay system.

The protein belongs to the peptidase S8 family.

Its subcellular location is the secreted. It catalyses the reaction Hydrolysis of proteins with broad specificity, and of Bz-Arg-OEt &gt; Ac-Tyr-OEt. Does not hydrolyze peptide amides.. Secreted alkaline protease that allows assimilation of proteinaceous substrates. The protein is Alkaline protease 1 (alp1) of Aspergillus flavus.